The chain runs to 199 residues: MANRGPSYGLSREVQQKIEKQYDPDLEQILIQWITTQCRKGVSQPQPGRENFQNWLKDGTVLCELINSLYPEGQAPVKKIQASTMAFKQMEQISQFLQAAERYGINTTDIFQTVDLWEGKNMACVQRTLMNLGGLAVARDDGLFSGDPNWFPKKSKENPRNFSDNQLQEGKNVIGLQMGTNRGASQAGMTGYGMPRQIL.

The residue at position 2 (Ala-2) is an N-acetylalanine. Phosphoserine is present on Ser-11. An N6-acetyllysine mark is found at Lys-17 and Lys-20. The Calponin-homology (CH) domain occupies 24-136 (PDLEQILIQW…RTLMNLGGLA (113 aa)). Ser-163 is modified (phosphoserine). Lys-171 participates in a covalent cross-link: Glycyl lysine isopeptide (Lys-Gly) (interchain with G-Cter in SUMO2). One copy of the Calponin-like repeat lies at 174–199 (IGLQMGTNRGASQAGMTGYGMPRQIL). Phosphothreonine is present on Thr-180. An omega-N-methylarginine mark is found at Arg-182 and Arg-196.

Belongs to the calponin family.

In Rattus norvegicus (Rat), this protein is Transgelin-2 (Tagln2).